The chain runs to 121 residues: Piercer of microtubule wall 2 protein (121 aa).

Basic and acidic residues predominate over residues 1 to 10 (MTDRNRDKKS). The disordered stretch occupies residues 1–29 (MTDRNRDKKSTSPSNSDTEMKSEQLPPCV).

It belongs to the PIERCE2 family. In terms of assembly, microtubule inner protein component of sperm flagellar doublet microtubules. Interacts with CFAP53, ODAD1 and ODAD3; the interactions link the outer dynein arms docking complex (ODA-DC) to the internal microtubule inner proteins (MIP) in cilium axoneme. As to expression, expressed in airway epithelial cells.

The protein resides in the cytoplasm. It is found in the cytoskeleton. It localises to the cilium axoneme. The protein localises to the flagellum axoneme. Microtubule inner protein involved in the attachment of outer dynein arms (ODAs) to dynein-decorated doublet microtubules (DMTs) in cilia axoneme, which is required for motile cilia beating. In Homo sapiens (Human), this protein is Piercer of microtubule wall 2 protein.